The following is a 918-amino-acid chain: Chaperone protein ClpC1, chloroplastic (918 aa).

Residues 88 to 230 form the Clp R domain; it reads FERFTEKAIK…RTQVIRMVGE (143 aa). Repeat regions lie at residues 91–156 and 166–230; these read FTEK…IGRG and FTPR…MVGE. The i stretch occupies residues 251–498; sequence LEEYGTNLTK…RVRLRHAQLP (248 aa). 296 to 303 lines the ATP pocket; sequence GEPGVGKT. Positions 505–540 constitute a UVR domain; sequence DKELRQVTKDKNEAVRGQDFEKAGELRDREMELKAQ. Residues 565-756 are II; it reads VTEADIQHIV…LLIMTSNVGS (192 aa). 639–646 contacts ATP; that stretch reads GPTGVGKS.

This sequence belongs to the ClpA/ClpB family. ClpC subfamily. Widely expressed.

It localises to the plastid. The protein localises to the chloroplast. Functionally, molecular chaperone that may interact with a ClpP-like protease involved in degradation of denatured proteins in the chloroplast. The sequence is that of Chaperone protein ClpC1, chloroplastic (CLPC1) from Oryza sativa subsp. japonica (Rice).